The following is a 439-amino-acid chain: 26S proteasome regulatory subunit 4 homolog (439 aa).

The segment at 1-46 (MGNNQSQGQGDKGEKKDQPKYQPPPPPTQFGKKKKRRGAETSTKLP) is disordered. 225–232 (GEPGTGKT) contributes to the ATP binding site.

The protein belongs to the AAA ATPase family.

It localises to the cytoplasm. Its subcellular location is the nucleus. In terms of biological role, the 26S proteasome is involved in the ATP-dependent degradation of ubiquitinated proteins. The regulatory (or ATPase) complex confers ATP dependency and substrate specificity to the 26S complex. Plays an important role in regulating both growth and multicellular development. The polypeptide is 26S proteasome regulatory subunit 4 homolog (psmC1) (Dictyostelium discoideum (Social amoeba)).